Reading from the N-terminus, the 254-residue chain is 5'/3'-nucleotidase SurE (254 aa).

A divalent metal cation is bound by residues Asp9, Asp10, Ser40, and Asn93.

It belongs to the SurE nucleotidase family. Requires a divalent metal cation as cofactor.

The protein localises to the cytoplasm. The enzyme catalyses a ribonucleoside 5'-phosphate + H2O = a ribonucleoside + phosphate. The catalysed reaction is a ribonucleoside 3'-phosphate + H2O = a ribonucleoside + phosphate. It catalyses the reaction [phosphate](n) + H2O = [phosphate](n-1) + phosphate + H(+). In terms of biological role, nucleotidase with a broad substrate specificity as it can dephosphorylate various ribo- and deoxyribonucleoside 5'-monophosphates and ribonucleoside 3'-monophosphates with highest affinity to 3'-AMP. Also hydrolyzes polyphosphate (exopolyphosphatase activity) with the preference for short-chain-length substrates (P20-25). Might be involved in the regulation of dNTP and NTP pools, and in the turnover of 3'-mononucleotides produced by numerous intracellular RNases (T1, T2, and F) during the degradation of various RNAs. The chain is 5'/3'-nucleotidase SurE from Yersinia pseudotuberculosis serotype O:1b (strain IP 31758).